A 637-amino-acid polypeptide reads, in one-letter code: Threonine--tRNA ligase (637 aa).

A TGS domain is found at 1–61 (MIKISLKNGK…NKDCKVEILT (61 aa)). Positions 242 to 532 (DHRKLGKELD…LIEHYAGAFP (291 aa)) are catalytic. Residues Cys333, His384, and His509 each contribute to the Zn(2+) site.

The protein belongs to the class-II aminoacyl-tRNA synthetase family. Homodimer. Requires Zn(2+) as cofactor.

The protein resides in the cytoplasm. The catalysed reaction is tRNA(Thr) + L-threonine + ATP = L-threonyl-tRNA(Thr) + AMP + diphosphate + H(+). Catalyzes the attachment of threonine to tRNA(Thr) in a two-step reaction: L-threonine is first activated by ATP to form Thr-AMP and then transferred to the acceptor end of tRNA(Thr). Also edits incorrectly charged L-seryl-tRNA(Thr). This is Threonine--tRNA ligase from Clostridium kluyveri (strain NBRC 12016).